A 558-amino-acid chain; its full sequence is Dihydroxy-acid dehydratase (558 aa).

D78 serves as a coordination point for Mg(2+). C119 lines the [2Fe-2S] cluster pocket. Positions 120 and 121 each coordinate Mg(2+). K121 is subject to N6-carboxylysine. A [2Fe-2S] cluster-binding site is contributed by C192. A Mg(2+)-binding site is contributed by E446. S472 serves as the catalytic Proton acceptor.

It belongs to the IlvD/Edd family. In terms of assembly, homodimer. [2Fe-2S] cluster serves as cofactor. The cofactor is Mg(2+).

It carries out the reaction (2R)-2,3-dihydroxy-3-methylbutanoate = 3-methyl-2-oxobutanoate + H2O. The catalysed reaction is (2R,3R)-2,3-dihydroxy-3-methylpentanoate = (S)-3-methyl-2-oxopentanoate + H2O. It functions in the pathway amino-acid biosynthesis; L-isoleucine biosynthesis; L-isoleucine from 2-oxobutanoate: step 3/4. The protein operates within amino-acid biosynthesis; L-valine biosynthesis; L-valine from pyruvate: step 3/4. In terms of biological role, functions in the biosynthesis of branched-chain amino acids. Catalyzes the dehydration of (2R,3R)-2,3-dihydroxy-3-methylpentanoate (2,3-dihydroxy-3-methylvalerate) into 2-oxo-3-methylpentanoate (2-oxo-3-methylvalerate) and of (2R)-2,3-dihydroxy-3-methylbutanoate (2,3-dihydroxyisovalerate) into 2-oxo-3-methylbutanoate (2-oxoisovalerate), the penultimate precursor to L-isoleucine and L-valine, respectively. The sequence is that of Dihydroxy-acid dehydratase from Campylobacter jejuni subsp. doylei (strain ATCC BAA-1458 / RM4099 / 269.97).